Consider the following 459-residue polypeptide: Putrescine aminotransferase (459 aa).

Pyridoxal 5'-phosphate-binding positions include 150–151 and Gln-274; that span reads GT. An N6-(pyridoxal phosphate)lysine modification is found at Lys-300. Position 332 (Thr-332) interacts with pyridoxal 5'-phosphate.

Belongs to the class-III pyridoxal-phosphate-dependent aminotransferase family. Putrescine aminotransferase subfamily. Pyridoxal 5'-phosphate is required as a cofactor.

The catalysed reaction is an alkane-alpha,omega-diamine + 2-oxoglutarate = an omega-aminoaldehyde + L-glutamate. The enzyme catalyses putrescine + 2-oxoglutarate = 1-pyrroline + L-glutamate + H2O. It catalyses the reaction cadaverine + 2-oxoglutarate = 5-aminopentanal + L-glutamate. Its pathway is amine and polyamine degradation; putrescine degradation; 4-aminobutanal from putrescine (transaminase route): step 1/1. Catalyzes the aminotransferase reaction from putrescine to 2-oxoglutarate, leading to glutamate and 4-aminobutanal, which spontaneously cyclizes to form 1-pyrroline. This is the first step in one of two pathways for putrescine degradation, where putrescine is converted into 4-aminobutanoate (gamma-aminobutyrate or GABA) via 4-aminobutanal. Also functions as a cadaverine transaminase in a a L-lysine degradation pathway to succinate that proceeds via cadaverine, glutarate and L-2-hydroxyglutarate. This chain is Putrescine aminotransferase, found in Escherichia coli O17:K52:H18 (strain UMN026 / ExPEC).